Reading from the N-terminus, the 223-residue chain is Ribonuclease 3 (223 aa).

The RNase III domain occupies 3–125; that stretch reads LERLQKKLGY…IIAAVYLDAG (123 aa). E38 lines the Mg(2+) pocket. Residue D42 is part of the active site. Residues D111 and E114 each contribute to the Mg(2+) site. E114 is an active-site residue. A DRBM domain is found at 152–222; the sequence is DPKTRLQEYL…ALQVIKVLGI (71 aa).

It belongs to the ribonuclease III family. As to quaternary structure, homodimer. Mg(2+) serves as cofactor.

The protein resides in the cytoplasm. The catalysed reaction is Endonucleolytic cleavage to 5'-phosphomonoester.. Digests double-stranded RNA. Involved in the processing of primary rRNA transcript to yield the immediate precursors to the large and small rRNAs (23S and 16S). Processes some mRNAs, and tRNAs when they are encoded in the rRNA operon. Processes pre-crRNA and tracrRNA of type II CRISPR loci if present in the organism. The protein is Ribonuclease 3 of Glaesserella parasuis serovar 5 (strain SH0165) (Haemophilus parasuis).